A 177-amino-acid chain; its full sequence is ATP synthase subunit delta (177 aa).

Belongs to the ATPase delta chain family. F-type ATPases have 2 components, F(1) - the catalytic core - and F(0) - the membrane proton channel. F(1) has five subunits: alpha(3), beta(3), gamma(1), delta(1), epsilon(1). F(0) has three main subunits: a(1), b(2) and c(10-14). The alpha and beta chains form an alternating ring which encloses part of the gamma chain. F(1) is attached to F(0) by a central stalk formed by the gamma and epsilon chains, while a peripheral stalk is formed by the delta and b chains.

It localises to the cell inner membrane. Its function is as follows. F(1)F(0) ATP synthase produces ATP from ADP in the presence of a proton or sodium gradient. F-type ATPases consist of two structural domains, F(1) containing the extramembraneous catalytic core and F(0) containing the membrane proton channel, linked together by a central stalk and a peripheral stalk. During catalysis, ATP synthesis in the catalytic domain of F(1) is coupled via a rotary mechanism of the central stalk subunits to proton translocation. In terms of biological role, this protein is part of the stalk that links CF(0) to CF(1). It either transmits conformational changes from CF(0) to CF(1) or is implicated in proton conduction. The protein is ATP synthase subunit delta of Shigella dysenteriae serotype 1 (strain Sd197).